The sequence spans 408 residues: MSLSVTRENFDEWMVPVYVPAPFIPVRGEGSRLWDQQGKEYIDFAGGIAVNALGHAHPALREALNEQANRFWHTGNGYTNEPALRLAKKLIDATFAERVFFCNSGAEANEAALKLARKYAHDRVGNHKSGIVAFKNAFHGRTLFTVSAGGQPTYSQDFAPLPPDIRHAAYNDLNSASALIDDNTCAVIVEPVQGEGGVIPATKAFLQGLRELCDRHQALLIFDEVQTGVGRTGELYAYMHYGVTPDILTTAKALGGGFPIGAMLTTQDYASVMTPGTHGTTYGGNPLATAVAGKVLDIINTPEMQNGVRQRHDAFIERLNTINVRFGMFSEIRGLGLLLGCVLQTEFAGKAKLIAQEAAKAGVMVLIAGGDVVRFAPALNVSDEEIATGLDRFALACERLQAGGASCG.

N6-(pyridoxal phosphate)lysine is present on Lys-252.

It belongs to the class-III pyridoxal-phosphate-dependent aminotransferase family. AstC subfamily. It depends on pyridoxal 5'-phosphate as a cofactor.

It carries out the reaction N(2)-succinyl-L-ornithine + 2-oxoglutarate = N-succinyl-L-glutamate 5-semialdehyde + L-glutamate. It functions in the pathway amino-acid degradation; L-arginine degradation via AST pathway; L-glutamate and succinate from L-arginine: step 3/5. Functionally, catalyzes the transamination of N(2)-succinylornithine and alpha-ketoglutarate into N(2)-succinylglutamate semialdehyde and glutamate. Can also act as an acetylornithine aminotransferase. The polypeptide is Succinylornithine transaminase (Salmonella dublin (strain CT_02021853)).